The following is a 213-amino-acid chain: MKAYQREFIELALKKQVLKFGEFTLKSGRKSPYFFNAGLFNTGRDLALIGRFYAAALLDSGIQCDLLFGPAYKGIPIATTTAVALAEHHDIDMPYCFNRKEAKDHGEGGTLVGSPLKGNVVLVDDVITAGTAIRESMEIIKQHNATLAGVMICLDRQERGNGEISAIQEVERDYGCKVFSIITLNDLINYLSGQPEMKDHLDAVKAYRAQYGI.

Residue Lys26 participates in 5-phospho-alpha-D-ribose 1-diphosphate binding. 34-35 lines the orotate pocket; the sequence is FF. 5-phospho-alpha-D-ribose 1-diphosphate is bound by residues 72–73, Arg99, Lys100, Lys103, His105, and 124–132; these read YK and DDVITAGTA. Orotate contacts are provided by Thr128 and Arg156.

This sequence belongs to the purine/pyrimidine phosphoribosyltransferase family. PyrE subfamily. As to quaternary structure, homodimer. Requires Mg(2+) as cofactor.

It catalyses the reaction orotidine 5'-phosphate + diphosphate = orotate + 5-phospho-alpha-D-ribose 1-diphosphate. The protein operates within pyrimidine metabolism; UMP biosynthesis via de novo pathway; UMP from orotate: step 1/2. Its function is as follows. Catalyzes the transfer of a ribosyl phosphate group from 5-phosphoribose 1-diphosphate to orotate, leading to the formation of orotidine monophosphate (OMP). This chain is Orotate phosphoribosyltransferase, found in Photorhabdus laumondii subsp. laumondii (strain DSM 15139 / CIP 105565 / TT01) (Photorhabdus luminescens subsp. laumondii).